Reading from the N-terminus, the 243-residue chain is Orotidine 5'-phosphate decarboxylase (243 aa).

Substrate contacts are provided by residues Asp-19, Lys-41, 69–78 (DLKFFDIPAT), Thr-124, Arg-185, Gln-194, Gly-214, and Arg-215. The active-site Proton donor is Lys-71.

The protein belongs to the OMP decarboxylase family. Type 1 subfamily. As to quaternary structure, homodimer.

The catalysed reaction is orotidine 5'-phosphate + H(+) = UMP + CO2. It functions in the pathway pyrimidine metabolism; UMP biosynthesis via de novo pathway; UMP from orotate: step 2/2. Its function is as follows. Catalyzes the decarboxylation of orotidine 5'-monophosphate (OMP) to uridine 5'-monophosphate (UMP). The protein is Orotidine 5'-phosphate decarboxylase of Xanthomonas axonopodis pv. citri (strain 306).